Reading from the N-terminus, the 325-residue chain is MIASAASAPRAICLLGPTASGKTAAALKLAERWPVEIISMDSALVYRGMDIGTAKPSAEEQAIAPHHLIDIIDPLDAYSAAQFANDANALIDAIRARGKLPLIVGGTMLYYKALTQGLSDLPGADPAIRAEIDAEAARDGWPALHAKLALVDPVTAARLHTTDAQRIQRALELYRLTGQPMSALLAREVGANAFQQHDAAAPYLTIALEPSDRLVLHARIAQRFDAMLAGGLLDEVEGLRRRGDLSPTLPSIRCVGYRQAWAYLEGEIDMAALREQGIAATRQLCKRQITWLRSTPERHVVDCLAPDYVDQVARLVQTSLESQSQ.

16-23 (GPTASGKT) contributes to the ATP binding site. 18–23 (TASGKT) lines the substrate pocket. Interaction with substrate tRNA stretches follow at residues 41 to 44 (DSAL), 165 to 169 (QRIQR), 253 to 258 (RCVGYR), and 286 to 293 (KRQITWLR).

It belongs to the IPP transferase family. Monomer. The cofactor is Mg(2+).

The catalysed reaction is adenosine(37) in tRNA + dimethylallyl diphosphate = N(6)-dimethylallyladenosine(37) in tRNA + diphosphate. Its function is as follows. Catalyzes the transfer of a dimethylallyl group onto the adenine at position 37 in tRNAs that read codons beginning with uridine, leading to the formation of N6-(dimethylallyl)adenosine (i(6)A). The protein is tRNA dimethylallyltransferase of Ralstonia pickettii (strain 12J).